The sequence spans 298 residues: Tyrosine recombinase XerC (298 aa).

The Core-binding (CB) domain maps to 1–83; the sequence is MHAAVERFLH…ALSRFADHLV (83 aa). Residues 104–283 form the Tyr recombinase domain; that stretch reads HLPRPVDVDQ…DWQHLADAYD (180 aa). Catalysis depends on residues Arg144, Lys166, His235, Arg238, and His261. Tyr270 (O-(3'-phospho-DNA)-tyrosine intermediate) is an active-site residue.

The protein belongs to the 'phage' integrase family. XerC subfamily. In terms of assembly, forms a cyclic heterotetrameric complex composed of two molecules of XerC and two molecules of XerD.

The protein localises to the cytoplasm. Its function is as follows. Site-specific tyrosine recombinase, which acts by catalyzing the cutting and rejoining of the recombining DNA molecules. The XerC-XerD complex is essential to convert dimers of the bacterial chromosome into monomers to permit their segregation at cell division. It also contributes to the segregational stability of plasmids. This chain is Tyrosine recombinase XerC, found in Chromohalobacter salexigens (strain ATCC BAA-138 / DSM 3043 / CIP 106854 / NCIMB 13768 / 1H11).